We begin with the raw amino-acid sequence, 515 residues long: DNA-directed RNA polymerase subunit Rpo2N (515 aa).

The protein belongs to the RNA polymerase beta chain family. As to quaternary structure, part of the RNA polymerase complex.

Its subcellular location is the cytoplasm. The enzyme catalyses RNA(n) + a ribonucleoside 5'-triphosphate = RNA(n+1) + diphosphate. Its function is as follows. DNA-dependent RNA polymerase (RNAP) catalyzes the transcription of DNA into RNA using the four ribonucleoside triphosphates as substrates. The Rpo2 subunit (Rpo2N and Rpo2C in this organism) is implicated in DNA promoter recognition and in nucleotide binding. This is DNA-directed RNA polymerase subunit Rpo2N from Methanothermobacter thermautotrophicus (strain Winter) (Methanobacterium thermoautotrophicum).